Here is a 407-residue protein sequence, read N- to C-terminus: Probable tRNA sulfurtransferase (407 aa).

One can recognise a THUMP domain in the interval 61-165 (NEITYRLSKI…LDAIYMYEEV (105 aa)). Residues 183–184 (ML), 208–209 (HF), R265, G287, and Q296 each bind ATP.

It belongs to the ThiI family.

It is found in the cytoplasm. It carries out the reaction [ThiI sulfur-carrier protein]-S-sulfanyl-L-cysteine + a uridine in tRNA + 2 reduced [2Fe-2S]-[ferredoxin] + ATP + H(+) = [ThiI sulfur-carrier protein]-L-cysteine + a 4-thiouridine in tRNA + 2 oxidized [2Fe-2S]-[ferredoxin] + AMP + diphosphate. The enzyme catalyses [ThiS sulfur-carrier protein]-C-terminal Gly-Gly-AMP + S-sulfanyl-L-cysteinyl-[cysteine desulfurase] + AH2 = [ThiS sulfur-carrier protein]-C-terminal-Gly-aminoethanethioate + L-cysteinyl-[cysteine desulfurase] + A + AMP + 2 H(+). The protein operates within cofactor biosynthesis; thiamine diphosphate biosynthesis. In terms of biological role, catalyzes the ATP-dependent transfer of a sulfur to tRNA to produce 4-thiouridine in position 8 of tRNAs, which functions as a near-UV photosensor. Also catalyzes the transfer of sulfur to the sulfur carrier protein ThiS, forming ThiS-thiocarboxylate. This is a step in the synthesis of thiazole, in the thiamine biosynthesis pathway. The sulfur is donated as persulfide by IscS. This is Probable tRNA sulfurtransferase from Staphylococcus aureus (strain JH1).